We begin with the raw amino-acid sequence, 325 residues long: Elongation factor P--(R)-beta-lysine ligase (325 aa).

76 to 78 (SPE) is a substrate binding site. ATP contacts are provided by residues 100–102 (RNE) and Asn109. Position 118 (Tyr118) interacts with substrate. 244–245 (EL) is an ATP binding site. Glu251 is a substrate binding site. Residue Gly300 participates in ATP binding.

The protein belongs to the class-II aminoacyl-tRNA synthetase family. EpmA subfamily. As to quaternary structure, homodimer.

It catalyses the reaction D-beta-lysine + L-lysyl-[protein] + ATP = N(6)-((3R)-3,6-diaminohexanoyl)-L-lysyl-[protein] + AMP + diphosphate + H(+). With EpmB is involved in the beta-lysylation step of the post-translational modification of translation elongation factor P (EF-P). Catalyzes the ATP-dependent activation of (R)-beta-lysine produced by EpmB, forming a lysyl-adenylate, from which the beta-lysyl moiety is then transferred to the epsilon-amino group of a conserved specific lysine residue in EF-P. The polypeptide is Elongation factor P--(R)-beta-lysine ligase (Photorhabdus laumondii subsp. laumondii (strain DSM 15139 / CIP 105565 / TT01) (Photorhabdus luminescens subsp. laumondii)).